The primary structure comprises 246 residues: 3-deoxy-manno-octulosonate cytidylyltransferase (246 aa).

It belongs to the KdsB family.

Its subcellular location is the cytoplasm. The enzyme catalyses 3-deoxy-alpha-D-manno-oct-2-ulosonate + CTP = CMP-3-deoxy-beta-D-manno-octulosonate + diphosphate. The protein operates within nucleotide-sugar biosynthesis; CMP-3-deoxy-D-manno-octulosonate biosynthesis; CMP-3-deoxy-D-manno-octulosonate from 3-deoxy-D-manno-octulosonate and CTP: step 1/1. It participates in bacterial outer membrane biogenesis; lipopolysaccharide biosynthesis. Its function is as follows. Activates KDO (a required 8-carbon sugar) for incorporation into bacterial lipopolysaccharide in Gram-negative bacteria. The polypeptide is 3-deoxy-manno-octulosonate cytidylyltransferase (Leptospira biflexa serovar Patoc (strain Patoc 1 / Ames)).